The chain runs to 163 residues: Transcriptional repressor NrdR (163 aa).

A disordered region spans residues 1-22; it reads MRCPKCQSLKSSVIDSRQAEDG. A zinc finger spans residues 3 to 34; the sequence is CPKCQSLKSSVIDSRQAEDGNTIRRRRSCDQC. Residues 49–139 form the ATP-cone domain; sequence LVVVKKDGTR…VYRSFKDVGE (91 aa).

It belongs to the NrdR family. The cofactor is Zn(2+).

In terms of biological role, negatively regulates transcription of bacterial ribonucleotide reductase nrd genes and operons by binding to NrdR-boxes. In Streptococcus suis (strain 98HAH33), this protein is Transcriptional repressor NrdR.